The sequence spans 257 residues: tRNA (guanine-N(1)-)-methyltransferase (257 aa).

S-adenosyl-L-methionine-binding positions include Gly-112 and 136-141 (LGDYVL).

It belongs to the RNA methyltransferase TrmD family. Homodimer.

It localises to the cytoplasm. The catalysed reaction is guanosine(37) in tRNA + S-adenosyl-L-methionine = N(1)-methylguanosine(37) in tRNA + S-adenosyl-L-homocysteine + H(+). Its function is as follows. Specifically methylates guanosine-37 in various tRNAs. The sequence is that of tRNA (guanine-N(1)-)-methyltransferase from Salinispora tropica (strain ATCC BAA-916 / DSM 44818 / JCM 13857 / NBRC 105044 / CNB-440).